The sequence spans 251 residues: Azurocidin (251 aa).

An N-terminal signal peptide occupies residues 1-19 (MTRLTVLALLAGLLASSRA). The propeptide at 20-26 (GSSPLLD) is removed in mature form. The propeptide at 25-26 (LD) is dipeptide found in non-mature form. One can recognise a Peptidase S1 domain in the interval 27-244 (IVGGRKARPR…FRDWIDGVLN (218 aa)). The possesses antibiotic activity stretch occupies residues 46-70 (NQGRHFCGGALIHARFVMTAASCFQ). Cysteines 52 and 68 form a disulfide. The N-linked (GlcNAc...) asparagine; partial glycan is linked to N126. N140 carries N-linked (GlcNAc...) asparagine glycosylation. Cystine bridges form between C149–C207, C180–C186, and C197–C222. N171 carries N-linked (GlcNAc...) asparagine; partial glycosylation. Residues 249–251 (GPA) constitute a propeptide, removed in mature form.

Belongs to the peptidase S1 family. Elastase subfamily. Post-translationally, cleavage of the N-terminal propeptide which is composed of 7 amino acids occurs in two steps. The initial cleavage of 5 amino acids is followed by the cleavage of a dipeptide to produce the mature form.

It localises to the cytoplasmic granule membrane. Functionally, this is a neutrophil granule-derived antibacterial and monocyte- and fibroblast-specific chemotactic glycoprotein. Binds heparin. The cytotoxic action is limited to many species of Gram-negative bacteria; this specificity may be explained by a strong affinity of the very basic N-terminal half for the negatively charged lipopolysaccharides that are unique to the Gram-negative bacterial outer envelope. It may play a role in mediating recruitment of monocytes in the second wave of inflammation. Has antibacterial activity against the Gram-negative bacterium P.aeruginosa, this activity is inhibited by LPS from P.aeruginosa. Acting alone, it does not have antimicrobial activity against the Gram-negative bacteria A.actinomycetemcomitans ATCC 29532, A.actinomycetemcomitans NCTC 9709, A.actinomycetemcomitans FDC-Y4, H.aphrophilus ATCC 13252, E.corrodens ATCC 23834, C.sputigena ATCC 33123, Capnocytophaga sp ATCC 33124, Capnocytophaga sp ATCC 27872 or E.coli ML-35. Has antibacterial activity against C.sputigena ATCC 33123 when acting synergistically with either elastase or cathepsin G. This Homo sapiens (Human) protein is Azurocidin.